A 196-amino-acid chain; its full sequence is GTP cyclohydrolase-2 (196 aa).

49–53 (RIHSE) lines the GTP pocket. Zn(2+) contacts are provided by Cys54, Cys65, and Cys67. GTP contacts are provided by residues Gln70, 92–94 (EGR), and Thr114. The active-site Proton acceptor is Asp126. Arg128 functions as the Nucleophile in the catalytic mechanism. GTP is bound by residues Thr149 and Lys154.

It belongs to the GTP cyclohydrolase II family. As to quaternary structure, homodimer. Requires Zn(2+) as cofactor.

The catalysed reaction is GTP + 4 H2O = 2,5-diamino-6-hydroxy-4-(5-phosphoribosylamino)-pyrimidine + formate + 2 phosphate + 3 H(+). Its pathway is cofactor biosynthesis; riboflavin biosynthesis; 5-amino-6-(D-ribitylamino)uracil from GTP: step 1/4. Catalyzes the conversion of GTP to 2,5-diamino-6-ribosylamino-4(3H)-pyrimidinone 5'-phosphate (DARP), formate and pyrophosphate. The chain is GTP cyclohydrolase-2 from Hamiltonella defensa subsp. Acyrthosiphon pisum (strain 5AT).